The primary structure comprises 304 residues: UDP-3-O-acyl-N-acetylglucosamine deacetylase (304 aa).

Zn(2+) is bound by residues His-78, His-237, and Asp-241. His-264 acts as the Proton donor in catalysis.

It belongs to the LpxC family. The cofactor is Zn(2+).

The enzyme catalyses a UDP-3-O-[(3R)-3-hydroxyacyl]-N-acetyl-alpha-D-glucosamine + H2O = a UDP-3-O-[(3R)-3-hydroxyacyl]-alpha-D-glucosamine + acetate. Its pathway is glycolipid biosynthesis; lipid IV(A) biosynthesis; lipid IV(A) from (3R)-3-hydroxytetradecanoyl-[acyl-carrier-protein] and UDP-N-acetyl-alpha-D-glucosamine: step 2/6. Functionally, catalyzes the hydrolysis of UDP-3-O-myristoyl-N-acetylglucosamine to form UDP-3-O-myristoylglucosamine and acetate, the committed step in lipid A biosynthesis. The polypeptide is UDP-3-O-acyl-N-acetylglucosamine deacetylase (Nitrosococcus oceani (strain ATCC 19707 / BCRC 17464 / JCM 30415 / NCIMB 11848 / C-107)).